A 417-amino-acid polypeptide reads, in one-letter code: Gamma-glutamyl phosphate reductase (417 aa).

Belongs to the gamma-glutamyl phosphate reductase family.

It is found in the cytoplasm. It catalyses the reaction L-glutamate 5-semialdehyde + phosphate + NADP(+) = L-glutamyl 5-phosphate + NADPH + H(+). It functions in the pathway amino-acid biosynthesis; L-proline biosynthesis; L-glutamate 5-semialdehyde from L-glutamate: step 2/2. Functionally, catalyzes the NADPH-dependent reduction of L-glutamate 5-phosphate into L-glutamate 5-semialdehyde and phosphate. The product spontaneously undergoes cyclization to form 1-pyrroline-5-carboxylate. The sequence is that of Gamma-glutamyl phosphate reductase from Erwinia tasmaniensis (strain DSM 17950 / CFBP 7177 / CIP 109463 / NCPPB 4357 / Et1/99).